Consider the following 182-residue polypeptide: Ribosome maturation factor RimM (182 aa).

The PRC barrel domain occupies 103 to 182 (EGDYYWKDLM…TIEVDWDPGF (80 aa)).

Belongs to the RimM family. As to quaternary structure, binds ribosomal protein uS19.

The protein localises to the cytoplasm. Its function is as follows. An accessory protein needed during the final step in the assembly of 30S ribosomal subunit, possibly for assembly of the head region. Essential for efficient processing of 16S rRNA. May be needed both before and after RbfA during the maturation of 16S rRNA. It has affinity for free ribosomal 30S subunits but not for 70S ribosomes. This is Ribosome maturation factor RimM from Klebsiella pneumoniae subsp. pneumoniae (strain ATCC 700721 / MGH 78578).